The chain runs to 614 residues: UvrABC system protein C (614 aa).

Residues 14–91 (TSPGCYIHKD…IKENKPKYNI (78 aa)) enclose the GIY-YIG domain. The UVR domain maps to 196 to 231 (NKIIDELKGKMAAAAQTMEFERAAEYRDLIQAIGTL). The tract at residues 595 to 614 (LPQVAEERVDYQTEGNHNKP) is disordered.

Belongs to the UvrC family. As to quaternary structure, interacts with UvrB in an incision complex.

It is found in the cytoplasm. Functionally, the UvrABC repair system catalyzes the recognition and processing of DNA lesions. UvrC both incises the 5' and 3' sides of the lesion. The N-terminal half is responsible for the 3' incision and the C-terminal half is responsible for the 5' incision. This chain is UvrABC system protein C, found in Streptococcus pneumoniae (strain Taiwan19F-14).